A 223-amino-acid polypeptide reads, in one-letter code: Phosphoribosylformylglycinamidine synthase subunit PurQ (223 aa).

The Glutamine amidotransferase type-1 domain occupies Ser-3–Ala-223. Cys-87 functions as the Nucleophile in the catalytic mechanism. Residues His-197 and Glu-199 contribute to the active site.

Part of the FGAM synthase complex composed of 1 PurL, 1 PurQ and 2 PurS subunits.

It localises to the cytoplasm. The enzyme catalyses N(2)-formyl-N(1)-(5-phospho-beta-D-ribosyl)glycinamide + L-glutamine + ATP + H2O = 2-formamido-N(1)-(5-O-phospho-beta-D-ribosyl)acetamidine + L-glutamate + ADP + phosphate + H(+). It catalyses the reaction L-glutamine + H2O = L-glutamate + NH4(+). It functions in the pathway purine metabolism; IMP biosynthesis via de novo pathway; 5-amino-1-(5-phospho-D-ribosyl)imidazole from N(2)-formyl-N(1)-(5-phospho-D-ribosyl)glycinamide: step 1/2. Its function is as follows. Part of the phosphoribosylformylglycinamidine synthase complex involved in the purines biosynthetic pathway. Catalyzes the ATP-dependent conversion of formylglycinamide ribonucleotide (FGAR) and glutamine to yield formylglycinamidine ribonucleotide (FGAM) and glutamate. The FGAM synthase complex is composed of three subunits. PurQ produces an ammonia molecule by converting glutamine to glutamate. PurL transfers the ammonia molecule to FGAR to form FGAM in an ATP-dependent manner. PurS interacts with PurQ and PurL and is thought to assist in the transfer of the ammonia molecule from PurQ to PurL. The polypeptide is Phosphoribosylformylglycinamidine synthase subunit PurQ (Brucella suis biovar 1 (strain 1330)).